We begin with the raw amino-acid sequence, 642 residues long: LIM domain kinase 2 (642 aa).

2 consecutive LIM zinc-binding domains span residues 12–63 (CLGC…CHKD) and 72–124 (CHGC…CGKC). Positions 152 to 239 (LISMPAATDG…TLQLLIEHDP (88 aa)) constitute a PDZ domain. Positions 282–304 (RSLRRSNSISKSPGPSSPKEPLL) are disordered. The segment covering 286-304 (RSNSISKSPGPSSPKEPLL) has biased composition (low complexity). The 278-residue stretch at 331–608 (LIHGEVLGKG…DSFEALSLYL (278 aa)) folds into the Protein kinase domain. Residues 337-345 (LGKGFFGQA) and lysine 360 each bind ATP. The active site involves aspartate 451. Threonine 505 carries the phosphothreonine modification.

Belongs to the protein kinase superfamily. TKL Ser/Thr protein kinase family. In terms of assembly, binds ROCK1 and LKAP. Expressed predominantly in the lung, and faintly in the kidney, liver, brain, spleen, gizzard, and intestine.

It localises to the cytoplasm. It is found in the cytoskeleton. The protein localises to the spindle. Its subcellular location is the microtubule organizing center. The protein resides in the centrosome. It carries out the reaction L-seryl-[protein] + ATP = O-phospho-L-seryl-[protein] + ADP + H(+). The catalysed reaction is L-threonyl-[protein] + ATP = O-phospho-L-threonyl-[protein] + ADP + H(+). In terms of biological role, serine/threonine-protein kinase that plays an essential role in the regulation of actin filament dynamics. Acts downstream of several Rho family GTPase signal transduction pathways. Involved in astral microtubule organization and mitotic spindle orientation during early stages of mitosis by mediating phosphorylation of TPPP. The polypeptide is LIM domain kinase 2 (LIMK2) (Gallus gallus (Chicken)).